The primary structure comprises 283 residues: Acetylglutamate kinase (283 aa).

Substrate contacts are provided by residues 64-65 (GG), arginine 86, and asparagine 179.

Belongs to the acetylglutamate kinase family. ArgB subfamily.

Its subcellular location is the cytoplasm. It catalyses the reaction N-acetyl-L-glutamate + ATP = N-acetyl-L-glutamyl 5-phosphate + ADP. The protein operates within amino-acid biosynthesis; L-arginine biosynthesis; N(2)-acetyl-L-ornithine from L-glutamate: step 2/4. Functionally, catalyzes the ATP-dependent phosphorylation of N-acetyl-L-glutamate. The polypeptide is Acetylglutamate kinase (Campylobacter hominis (strain ATCC BAA-381 / DSM 21671 / CCUG 45161 / LMG 19568 / NCTC 13146 / CH001A)).